The following is a 368-amino-acid chain: Propane 2-monooxygenase, hydroxylase component small subunit (368 aa).

The disordered stretch occupies residues 1–33 (MSAPAQPRERSFPSIEFTDAEADAREFPSSRSR).

The protein belongs to the TmoE/XamoE family. As to quaternary structure, the propane 2-monooxygenase multicomponent enzyme system is composed of an electron transfer component and a monooxygenase component interacting with the effector protein PrmD. The electron transfer component is composed of a reductase (PrmB), and the monooxygenase component is formed by a large subunit (PrmA) and a small subunit (PrmC). Probably requires the presence of the chaperonin-like protein PrmG to ensure a productive folding, resulting of a soluble PrmC, which leads to the active form of PrmABCD.

It catalyses the reaction propane + NADH + O2 + H(+) = propan-2-ol + NAD(+) + H2O. It carries out the reaction phenol + NADH + O2 + H(+) = hydroquinone + NAD(+) + H2O. Its function is as follows. Component of the propane 2-monooxygenase multicomponent enzyme system which is involved in the degradation of propane via the O2-dependent hydroxylation of propane. Under acetone induction, also able to catalyze the oxidation of phenol to yield hydroquinone. This chain is Propane 2-monooxygenase, hydroxylase component small subunit, found in Gordonia sp. (strain TY-5).